A 287-amino-acid chain; its full sequence is 4-hydroxybenzoate octaprenyltransferase (287 aa).

A run of 9 helical transmembrane segments spans residues 21–41, 44–64, 91–111, 112–132, 139–159, 160–180, 211–231, 235–255, and 263–283; these read VGIF…AKGA, FKIA…GCIV, VTEA…LVLL, LNRL…VYPF, LPQL…FAAT, VGHV…WPIV, LMIG…GWYL, YWFY…QFLI, and CFAA…GILL.

It belongs to the UbiA prenyltransferase family. The cofactor is Mg(2+).

The protein resides in the cell inner membrane. The catalysed reaction is all-trans-octaprenyl diphosphate + 4-hydroxybenzoate = 4-hydroxy-3-(all-trans-octaprenyl)benzoate + diphosphate. It functions in the pathway cofactor biosynthesis; ubiquinone biosynthesis. Its function is as follows. Catalyzes the prenylation of para-hydroxybenzoate (PHB) with an all-trans polyprenyl group. Mediates the second step in the final reaction sequence of ubiquinone-8 (UQ-8) biosynthesis, which is the condensation of the polyisoprenoid side chain with PHB, generating the first membrane-bound Q intermediate 3-octaprenyl-4-hydroxybenzoate. This Coxiella burnetii (strain RSA 331 / Henzerling II) protein is 4-hydroxybenzoate octaprenyltransferase.